The primary structure comprises 36 residues: Peptide POLARIS (36 aa).

Belongs to the POLARIS peptide family. Mostly expressed in the embryonic root from the heart stage and in the seedling primary and lateral root tips, especially in the columella initials and lateral root cap. Also detectable in aerial parts of the seedling, sepals and leaves, principally in vascular tissues of the lamina and petiole.

Its function is as follows. Required for correct root growth and vascular development, probably by modulating both cell division rate in meristems and cell elongation in roots. Negative regulator of the ethylene signaling pathway that modulates microtubule cytoskeleton dynamics and auxin transport and homeostasis, and possibly cytokinin signaling, thus influencing root growth and lateral root development. This is Peptide POLARIS (PLS) from Arabidopsis thaliana (Mouse-ear cress).